The primary structure comprises 201 residues: uncharacterized protein (201 aa).

The signal sequence occupies residues 1–28 (MMTFKNLRYGLSSSVVLAASLFSVLSYA).

It belongs to the fimbrial protein family.

Its subcellular location is the fimbrium. Part of the yadCKLM-htrE-yadVN fimbrial operon. Could contribute to adhesion to various surfaces in specific environmental niches. This is an uncharacterized protein from Escherichia coli (strain K12).